The chain runs to 148 residues: Protein Smg homolog (148 aa).

The protein belongs to the Smg family.

This chain is Protein Smg homolog, found in Thiobacillus denitrificans (strain ATCC 25259 / T1).